The primary structure comprises 159 residues: Mitotic-spindle organizing protein 2 (159 aa).

The interval Leu-87 to Pro-159 is disordered. The span at Pro-91–Glu-105 shows a compositional bias: polar residues. At Arg-111 the chain carries Omega-N-methylarginine. Ser-153 carries the phosphoserine modification.

This sequence belongs to the MOZART2 family. Associates with the gamma-tubulin ring complex (gTuRC) consisting of TUBGCP2, TUBGCP3, TUBGCP4, TUBGCP5 and TUBGCP6 and gamma-tubulin TUBG1 or TUBG2; within the complex, interacts with TUBGCP2; the interaction plays a role in gTuRC activation.

The protein localises to the cytoplasm. It is found in the cytoskeleton. It localises to the microtubule organizing center. The protein resides in the centrosome. Its subcellular location is the spindle. Required for the recruitment and the assembly of the gamma-tubulin ring complex (gTuRC) at the centrosome. The gTuRC regulates the minus-end nucleation of alpha-beta tubulin heterodimers that grow into microtubule protafilaments, a critical step in centrosome duplication and spindle formation. The protein is Mitotic-spindle organizing protein 2 (Mzt2) of Mus musculus (Mouse).